We begin with the raw amino-acid sequence, 158 residues long: Transcription elongation factor GreA (158 aa).

A coiled-coil region spans residues 45-72; that stretch reads AEYHAAREQQSFIEGRIKQLEGELSHAE.

Belongs to the GreA/GreB family.

In terms of biological role, necessary for efficient RNA polymerase transcription elongation past template-encoded arresting sites. The arresting sites in DNA have the property of trapping a certain fraction of elongating RNA polymerases that pass through, resulting in locked ternary complexes. Cleavage of the nascent transcript by cleavage factors such as GreA or GreB allows the resumption of elongation from the new 3'terminus. GreA releases sequences of 2 to 3 nucleotides. This chain is Transcription elongation factor GreA, found in Xylella fastidiosa (strain M12).